We begin with the raw amino-acid sequence, 85 residues long: Coiled-coil-helix-coiled-coil-helix domain-containing protein 7 (85 aa).

The 43-residue stretch at 13 to 55 (INPCLSESDASTRCMDENNYDRERCSSYFLKYKNCRRFWNSVM) folds into the CHCH domain. 2 short sequence motifs (cx9C motif) span residues 16 to 26 (CLSESDASTRC) and 37 to 47 (CSSYFLKYKNC). Disulfide bonds link cysteine 16–cysteine 47 and cysteine 26–cysteine 37.

It belongs to the CHCHD7 family. As to quaternary structure, monomer.

It localises to the mitochondrion intermembrane space. In Mus musculus (Mouse), this protein is Coiled-coil-helix-coiled-coil-helix domain-containing protein 7 (Chchd7).